Reading from the N-terminus, the 467-residue chain is MTLRLFDTESRTMREFAPLVPGRASVYLCGATVQGEPHIGHVRSGVAFDVLRRWLQAHDYDVWFIRNVTDIDDKILNKAAEAGRPWWEWAATYERAFDRAYRLLGVQPPSAEPRATGHITQMVELMRRLIERGHAYASAGNVYFDVQSYPEYGALSGHKLDDVHQGESAGEGKRDPRDFTLWKAAKPGEPSWPSPWGPGRPGWHLECSAMAEFYLGAEFDIHCGGMDLVFPHHENEIAQSKAAGDGFARYWLHNGWVTMGGEKMSKSLGNVLSVPNMLTKVRAVELRFYLGSAHYRSMLEYSDKALDDAVAGYQRIEAFLHRTAERVGEIPVGKWTDAFAEAMDDDLAVPRALAEVFRLVTEGNKALEAGAVDTARELGGQVRAMLGILGVCPFDPQWDHKQDDSVAQTALDVLVRAELDRRQQARADKDWATADAVRDRLHAAGIDVTDTPNGPEWSLRTARGKAN.

Residue cysteine 29 participates in Zn(2+) binding. The 'HIGH' region motif lies at 31–41 (ATVQGEPHIGH). The Zn(2+) site is built by cysteine 207, histidine 232, and glutamate 236. The 'KMSKS' region motif lies at 263–267 (KMSKS). Lysine 266 is a binding site for ATP. Positions 446–467 (IDVTDTPNGPEWSLRTARGKAN) are disordered.

It belongs to the class-I aminoacyl-tRNA synthetase family. In terms of assembly, monomer. Zn(2+) serves as cofactor.

It localises to the cytoplasm. The enzyme catalyses tRNA(Cys) + L-cysteine + ATP = L-cysteinyl-tRNA(Cys) + AMP + diphosphate. This is Cysteine--tRNA ligase from Nocardia farcinica (strain IFM 10152).